The sequence spans 382 residues: S-adenosylmethionine synthase (382 aa).

Residue His-16 participates in ATP binding. A Mg(2+)-binding site is contributed by Asp-18. Position 44 (Glu-44) interacts with K(+). 2 residues coordinate L-methionine: Glu-57 and Gln-100. Residues 100 to 110 (QSPDIAQGVDN) are flexible loop. ATP contacts are provided by residues 165-167 (DAK), 231-232 (RF), Asp-240, 246-247 (RK), and Lys-267. Position 240 (Asp-240) interacts with L-methionine. Lys-271 lines the L-methionine pocket.

The protein belongs to the AdoMet synthase family. In terms of assembly, homotetramer; dimer of dimers. The cofactor is Mg(2+). K(+) is required as a cofactor.

It is found in the cytoplasm. The enzyme catalyses L-methionine + ATP + H2O = S-adenosyl-L-methionine + phosphate + diphosphate. It functions in the pathway amino-acid biosynthesis; S-adenosyl-L-methionine biosynthesis; S-adenosyl-L-methionine from L-methionine: step 1/1. In terms of biological role, catalyzes the formation of S-adenosylmethionine (AdoMet) from methionine and ATP. The overall synthetic reaction is composed of two sequential steps, AdoMet formation and the subsequent tripolyphosphate hydrolysis which occurs prior to release of AdoMet from the enzyme. This is S-adenosylmethionine synthase from Legionella pneumophila (strain Lens).